The chain runs to 202 residues: Thymidylate kinase (202 aa).

Gly-7 to Thr-14 contacts ATP.

Belongs to the thymidylate kinase family.

The catalysed reaction is dTMP + ATP = dTDP + ADP. Its function is as follows. Phosphorylation of dTMP to form dTDP in both de novo and salvage pathways of dTTP synthesis. The chain is Thymidylate kinase from Ehrlichia ruminantium (strain Gardel).